Consider the following 1060-residue polypeptide: Carbamoyl phosphate synthase large chain (1060 aa).

A carboxyphosphate synthetic domain region spans residues 1 to 401 (MPKRTDIRKI…SLLKACRSLE (401 aa)). Residues arginine 129, arginine 169, glycine 175, glycine 176, arginine 208, isoleucine 210, glutamate 215, glycine 241, isoleucine 242, histidine 243, glutamine 284, and glutamate 298 each coordinate ATP. Residues 133–327 (KQLMEELNQP…IAKLAAKIAV (195 aa)) enclose the ATP-grasp 1 domain. Residues glutamine 284, glutamate 298, and asparagine 300 each coordinate Mg(2+). Positions 284, 298, and 300 each coordinate Mn(2+). The oligomerization domain stretch occupies residues 402–546 (IGVDHIKIAD…YSTYAVENES (145 aa)). Residues 547 to 929 (LISDKASILV…ALYKAFEAAY (383 aa)) are carbamoyl phosphate synthetic domain. In terms of domain architecture, ATP-grasp 2 spans 671–861 (EATLQALNIP…MAQVATKVIL (191 aa)). ATP contacts are provided by arginine 707, alanine 746, leucine 748, glutamate 752, glycine 777, valine 778, histidine 779, serine 780, glutamine 820, and glutamate 832. The Mg(2+) site is built by glutamine 820, glutamate 832, and asparagine 834. 3 residues coordinate Mn(2+): glutamine 820, glutamate 832, and asparagine 834. The 131-residue stretch at 930-1060 (LHMPDYGNIV…SRAFTLKVLD (131 aa)) folds into the MGS-like domain. Positions 930–1060 (LHMPDYGNIV…SRAFTLKVLD (131 aa)) are allosteric domain.

This sequence belongs to the CarB family. Composed of two chains; the small (or glutamine) chain promotes the hydrolysis of glutamine to ammonia, which is used by the large (or ammonia) chain to synthesize carbamoyl phosphate. Tetramer of heterodimers (alpha,beta)4. Requires Mg(2+) as cofactor. Mn(2+) serves as cofactor.

The catalysed reaction is hydrogencarbonate + L-glutamine + 2 ATP + H2O = carbamoyl phosphate + L-glutamate + 2 ADP + phosphate + 2 H(+). It catalyses the reaction hydrogencarbonate + NH4(+) + 2 ATP = carbamoyl phosphate + 2 ADP + phosphate + 2 H(+). It functions in the pathway amino-acid biosynthesis; L-arginine biosynthesis; carbamoyl phosphate from bicarbonate: step 1/1. It participates in pyrimidine metabolism; UMP biosynthesis via de novo pathway; (S)-dihydroorotate from bicarbonate: step 1/3. Its function is as follows. Large subunit of the glutamine-dependent carbamoyl phosphate synthetase (CPSase). CPSase catalyzes the formation of carbamoyl phosphate from the ammonia moiety of glutamine, carbonate, and phosphate donated by ATP, constituting the first step of 2 biosynthetic pathways, one leading to arginine and/or urea and the other to pyrimidine nucleotides. The large subunit (synthetase) binds the substrates ammonia (free or transferred from glutamine from the small subunit), hydrogencarbonate and ATP and carries out an ATP-coupled ligase reaction, activating hydrogencarbonate by forming carboxy phosphate which reacts with ammonia to form carbamoyl phosphate. The protein is Carbamoyl phosphate synthase large chain of Streptococcus agalactiae serotype III (strain NEM316).